Reading from the N-terminus, the 327-residue chain is Phenylalanine--tRNA ligase alpha subunit (327 aa).

Glu-252 is a Mg(2+) binding site.

It belongs to the class-II aminoacyl-tRNA synthetase family. Phe-tRNA synthetase alpha subunit type 1 subfamily. Tetramer of two alpha and two beta subunits. Mg(2+) serves as cofactor.

The protein localises to the cytoplasm. It catalyses the reaction tRNA(Phe) + L-phenylalanine + ATP = L-phenylalanyl-tRNA(Phe) + AMP + diphosphate + H(+). The protein is Phenylalanine--tRNA ligase alpha subunit of Salmonella agona (strain SL483).